A 329-amino-acid chain; its full sequence is MNNLNSVFDYEDIQLIPNKCVINSRSEADTSVKLGNYTFKLPVVPANMQTIIDDKIAEMLAKEGYFYIMHRFEAENRAAFIKKMHKDGLIASISVGVKADEHAFIREISAEALIPEFITIDIAHGHADSVIKTIQLIKRLMPQTFVIAGNVGTPEAVRELENAGADATKVGIGPGKVCITKVKTGFGTGGWQLAAVKWCAKAASKPVIADGGIRTHGDVAKSIRMGATMVMVGSLFAAHEESPGQTVERDGQLFKEYFGSASEYQKGEHKNVEGKKILLPHKGSLKDTLKEMEEDLQSSISYAGGRDLSALTKVDYVVVKNSIWNGDAI.

Cysteine 178 functions as the Thioimidate intermediate in the catalytic mechanism. 207-230 (VIADGGIRTHGDVAKSIRMGATMV) serves as a coordination point for NADP(+).

It belongs to the IMPDH/GMPR family. GuaC type 2 subfamily.

It catalyses the reaction IMP + NH4(+) + NADP(+) = GMP + NADPH + 2 H(+). Its function is as follows. Catalyzes the irreversible NADPH-dependent deamination of GMP to IMP. It functions in the conversion of nucleobase, nucleoside and nucleotide derivatives of G to A nucleotides, and in maintaining the intracellular balance of A and G nucleotides. The polypeptide is GMP reductase (Lactococcus lactis subsp. cremoris (strain MG1363)).